A 96-amino-acid polypeptide reads, in one-letter code: Cytochrome b (96 aa).

The next 3 helical transmembrane spans lie at 1 to 15, 39 to 60, and 75 to 95; these read LCXIXQILTGLFLAM, WLIRNMHANGSSFFFICIYLHI, and WNVGVILLLLVMMTAFVGYVL. 2 residues coordinate heme b: His45 and His59.

This sequence belongs to the cytochrome b family. As to quaternary structure, the cytochrome bc1 complex contains 3 respiratory subunits (MT-CYB, CYC1 and UQCRFS1), 2 core proteins (UQCRC1 and UQCRC2) and probably 6 low-molecular weight proteins. Requires heme b as cofactor.

The protein resides in the mitochondrion inner membrane. In terms of biological role, component of the ubiquinol-cytochrome c reductase complex (complex III or cytochrome b-c1 complex) that is part of the mitochondrial respiratory chain. The b-c1 complex mediates electron transfer from ubiquinol to cytochrome c. Contributes to the generation of a proton gradient across the mitochondrial membrane that is then used for ATP synthesis. The chain is Cytochrome b (mt-cyb) from Geophagus steindachneri (Red hump earth eater).